The following is a 2504-amino-acid chain: Fatty acid synthase (2504 aa).

Met-1 carries the post-translational modification N-acetylmethionine. The Ketosynthase family 3 (KS3) domain occupies 1–406 (MEEVVIAGMS…GSNVHVILQP (406 aa)). Lys-59 is subject to N6-acetyllysine. Ser-63 carries the phosphoserine modification. Lys-70 is subject to N6-acetyllysine. The For beta-ketoacyl synthase activity role is filled by Cys-161. The residue at position 207 (Ser-207) is a Phosphoserine. Catalysis depends on His-293, which acts as the For beta-ketoacyl synthase activity. At Lys-298 the chain carries N6-acetyllysine. His-331 functions as the For beta-ketoacyl synthase activity in the catalytic mechanism. The interval 429–817 (RTLEAVQDLL…INVNPNALFP (389 aa)) is acyl and malonyl transferases. Lys-528 carries the post-translational modification N6-acetyllysine. Ser-581 functions as the For malonyltransferase activity in the catalytic mechanism. An acyl-CoA is bound by residues 647–648 (DT) and Phe-671. Lys-673 bears the N6-acetyllysine mark. A Phosphoserine modification is found at Ser-725. Arg-773 contacts an acyl-CoA. Lys-790 is subject to N6-acetyllysine. An N-terminal hotdog fold region spans residues 844–967 (VPVAEDFPNG…VYLWEDPNSK (124 aa)). One can recognise a PKS/mFAS DH domain in the interval 844-1104 (VPVAEDFPNG…ISRLQTTATS (261 aa)). Catalysis depends on His-878, which acts as the Proton acceptor; for dehydratase activity. The interval 982 to 1104 (SVSRLTQGEV…ISRLQTTATS (123 aa)) is C-terminal hotdog fold. The residue at position 993 (Lys-993) is an N6-acetyllysine. The active-site Proton donor; for dehydratase activity is the Asp-1032. N6-acetyllysine occurs at positions 1071 and 1276. Cys-1464 carries the post-translational modification S-nitrosocysteine. A phosphoserine mark is found at Ser-1577 and Ser-1587. Residues 1628–1856 (DVPSSWTLEE…VQVREEEPEA (229 aa)) form an enoyl reductase region. NADP(+) is bound at residue 1664 to 1681 (VLIHSGSGGVGQAAISIA). Lys-1697 is subject to N6-(pyridoxal phosphate)lysine; alternate. An N6-acetyllysine; alternate modification is found at Lys-1697. Lys-1764 and Lys-1840 each carry N6-acetyllysine. Positions 1857-2111 (VLPGAQPTLI…FVLAEKKAVA (255 aa)) are beta-ketoacyl reductase. 1879–1894 (SYIITGGLGGFGLELA) is an NADP(+) binding site. Lys-1988 is modified (N6-acetyllysine). S-nitrosocysteine is present on Cys-2084. A Carrier domain is found at 2112-2192 (HGDGDTQRDL…EMSSKTDSAT (81 aa)). O-(pantetheine 4'-phosphoryl)serine; alternate is present on Ser-2150. Ser-2150 bears the Phosphoserine; alternate mark. A disordered region spans residues 2181 to 2205 (LQEMSSKTDSATDTTAPKSRSDTSL). Positions 2185–2198 (SSKTDSATDTTAPK) are enriched in low complexity. 2 positions are modified to phosphoserine: Ser-2190 and Ser-2229. Residues 2201-2504 (SDTSLKQNQL…AEPRVSVREG (304 aa)) are thioesterase. The For thioesterase activity role is filled by Ser-2301. Lys-2384 carries the post-translational modification N6-acetyllysine. Lys-2442 participates in a covalent cross-link: Glycyl lysine isopeptide (Lys-Gly) (interchain with G-Cter in SUMO2). His-2474 acts as the For thioesterase activity in catalysis.

In terms of assembly, homodimer which is arranged in a head to tail fashion. Interacts with CEACAM1; this interaction is insulin and phosphorylation-dependent; reduces fatty-acid synthase activity. S-nitrosylation of Fatty acid synthase at cysteine residues Cys-1464 or Cys-2084 is important for the enzyme dimerization. In adipocytes, S-nitrosylation of Fatty acid synthase occurs under physiological conditions and gradually increases during adipogenesis.

The protein localises to the cytoplasm. Its subcellular location is the melanosome. It carries out the reaction acetyl-CoA + n malonyl-CoA + 2n NADPH + 2n H(+) = a long-chain fatty acid + (n+1) CoA + n CO2 + 2n NADP(+).. The catalysed reaction is holo-[ACP] + acetyl-CoA = acetyl-[ACP] + CoA. It catalyses the reaction holo-[ACP] + malonyl-CoA = malonyl-[ACP] + CoA. The enzyme catalyses a fatty acyl-[ACP] + malonyl-[ACP] + H(+) = a 3-oxoacyl-[ACP] + holo-[ACP] + CO2. It carries out the reaction a (3R)-hydroxyacyl-[ACP] + NADP(+) = a 3-oxoacyl-[ACP] + NADPH + H(+). The catalysed reaction is a (3R)-hydroxyacyl-[ACP] = a (2E)-enoyl-[ACP] + H2O. It catalyses the reaction a 2,3-saturated acyl-[ACP] + NADP(+) = a (2E)-enoyl-[ACP] + NADPH + H(+). The enzyme catalyses hexadecanoyl-[ACP] + H2O = hexadecanoate + holo-[ACP] + H(+). It carries out the reaction acetyl-[ACP] + malonyl-[ACP] + H(+) = 3-oxobutanoyl-[ACP] + holo-[ACP] + CO2. The catalysed reaction is 3-oxobutanoyl-[ACP] + NADPH + H(+) = (3R)-hydroxybutanoyl-[ACP] + NADP(+). It catalyses the reaction (3R)-hydroxybutanoyl-[ACP] = (2E)-butenoyl-[ACP] + H2O. The enzyme catalyses (2E)-butenoyl-[ACP] + NADPH + H(+) = butanoyl-[ACP] + NADP(+). It carries out the reaction butanoyl-[ACP] + malonyl-[ACP] + H(+) = 3-oxohexanoyl-[ACP] + holo-[ACP] + CO2. The catalysed reaction is 3-oxohexanoyl-[ACP] + NADPH + H(+) = (3R)-hydroxyhexanoyl-[ACP] + NADP(+). It catalyses the reaction (3R)-hydroxyhexanoyl-[ACP] = (2E)-hexenoyl-[ACP] + H2O. The enzyme catalyses (2E)-hexenoyl-[ACP] + NADPH + H(+) = hexanoyl-[ACP] + NADP(+). It carries out the reaction hexanoyl-[ACP] + malonyl-[ACP] + H(+) = 3-oxooctanoyl-[ACP] + holo-[ACP] + CO2. The catalysed reaction is 3-oxooctanoyl-[ACP] + NADPH + H(+) = (3R)-hydroxyoctanoyl-[ACP] + NADP(+). It catalyses the reaction (3R)-hydroxyoctanoyl-[ACP] = (2E)-octenoyl-[ACP] + H2O. The enzyme catalyses (2E)-octenoyl-[ACP] + NADPH + H(+) = octanoyl-[ACP] + NADP(+). It carries out the reaction octanoyl-[ACP] + malonyl-[ACP] + H(+) = 3-oxodecanoyl-[ACP] + holo-[ACP] + CO2. The catalysed reaction is 3-oxodecanoyl-[ACP] + NADPH + H(+) = (3R)-hydroxydecanoyl-[ACP] + NADP(+). It catalyses the reaction (3R)-hydroxydecanoyl-[ACP] = (2E)-decenoyl-[ACP] + H2O. The enzyme catalyses (2E)-decenoyl-[ACP] + NADPH + H(+) = decanoyl-[ACP] + NADP(+). It carries out the reaction decanoyl-[ACP] + malonyl-[ACP] + H(+) = 3-oxododecanoyl-[ACP] + holo-[ACP] + CO2. The catalysed reaction is 3-oxododecanoyl-[ACP] + NADPH + H(+) = (3R)-hydroxydodecanoyl-[ACP] + NADP(+). It catalyses the reaction (3R)-hydroxydodecanoyl-[ACP] = (2E)-dodecenoyl-[ACP] + H2O. The enzyme catalyses (2E)-dodecenoyl-[ACP] + NADPH + H(+) = dodecanoyl-[ACP] + NADP(+). It carries out the reaction dodecanoyl-[ACP] + malonyl-[ACP] + H(+) = 3-oxotetradecanoyl-[ACP] + holo-[ACP] + CO2. The catalysed reaction is 3-oxotetradecanoyl-[ACP] + NADPH + H(+) = (3R)-hydroxytetradecanoyl-[ACP] + NADP(+). It catalyses the reaction (3R)-hydroxytetradecanoyl-[ACP] = (2E)-tetradecenoyl-[ACP] + H2O. The enzyme catalyses (2E)-tetradecenoyl-[ACP] + NADPH + H(+) = tetradecanoyl-[ACP] + NADP(+). It carries out the reaction tetradecanoyl-[ACP] + malonyl-[ACP] + H(+) = 3-oxohexadecanoyl-[ACP] + holo-[ACP] + CO2. The catalysed reaction is 3-oxohexadecanoyl-[ACP] + NADPH + H(+) = (3R)-hydroxyhexadecanoyl-[ACP] + NADP(+). It catalyses the reaction (3R)-hydroxyhexadecanoyl-[ACP] = (2E)-hexadecenoyl-[ACP] + H2O. The enzyme catalyses (2E)-hexadecenoyl-[ACP] + NADPH + H(+) = hexadecanoyl-[ACP] + NADP(+). It carries out the reaction hexadecanoyl-[ACP] + malonyl-[ACP] + H(+) = 3-oxooctadecanoyl-[ACP] + holo-[ACP] + CO2. The catalysed reaction is 3-oxooctadecanoyl-[ACP] + NADPH + H(+) = (3R)-hydroxyoctadecanoyl-[ACP] + NADP(+). It catalyses the reaction (3R)-hydroxyoctadecanoyl-[ACP] = (2E)-octadecenoyl-[ACP] + H2O. The enzyme catalyses (2E)-octadecenoyl-[ACP] + NADPH + H(+) = octadecanoyl-[ACP] + NADP(+). It carries out the reaction tetradecanoyl-[ACP] + H2O = tetradecanoate + holo-[ACP] + H(+). Its pathway is lipid metabolism; fatty acid biosynthesis. In terms of biological role, fatty acid synthetase is a multifunctional enzyme that catalyzes the de novo biosynthesis of long-chain saturated fatty acids starting from acetyl-CoA and malonyl-CoA in the presence of NADPH. This multifunctional protein contains 7 catalytic activities and a site for the binding of the prosthetic group 4'-phosphopantetheine of the acyl carrier protein ([ACP]) domain. The sequence is that of Fatty acid synthase (Fasn) from Mus musculus (Mouse).